The chain runs to 513 residues: 2-isopropylmalate synthase (513 aa).

The 263-residue stretch at 4-266 (IEFFDTSLRD…QSPLKLSETA (263 aa)) folds into the Pyruvate carboxyltransferase domain. Residues D13, H201, H203, and N237 each contribute to the Mn(2+) site. Residues 390-513 (ILDNVQIDGH…VEQISAHDGI (124 aa)) are regulatory domain.

Belongs to the alpha-IPM synthase/homocitrate synthase family. LeuA type 1 subfamily. Homodimer. Mn(2+) serves as cofactor.

Its subcellular location is the cytoplasm. The catalysed reaction is 3-methyl-2-oxobutanoate + acetyl-CoA + H2O = (2S)-2-isopropylmalate + CoA + H(+). It functions in the pathway amino-acid biosynthesis; L-leucine biosynthesis; L-leucine from 3-methyl-2-oxobutanoate: step 1/4. Functionally, catalyzes the condensation of the acetyl group of acetyl-CoA with 3-methyl-2-oxobutanoate (2-ketoisovalerate) to form 3-carboxy-3-hydroxy-4-methylpentanoate (2-isopropylmalate). This chain is 2-isopropylmalate synthase, found in Lactococcus lactis subsp. lactis (strain IL1403) (Streptococcus lactis).